We begin with the raw amino-acid sequence, 463 residues long: Polyadenylate-binding protein-interacting protein 1 (463 aa).

A disordered region spans residues 1–86 (MSDGFERAPG…HKRTSPAAQL (86 aa)). The 218-residue stretch at 145-362 (TEYVQDFLNH…LKLVELRSSN (218 aa)) folds into the MIF4G domain. The tract at residues 420-442 (RDYDENGTDGGDSYFEDDDDNEM) is disordered. The span at 433-442 (YFEDDDDNEM) shows a compositional bias: acidic residues.

Interacts with the RRM1-RRM2 and C-terminal regions of epabp.

The protein localises to the cytoplasm. Acts as a coactivator in the regulation of translation initiation of poly(A)-containing mRNAs. This Xenopus laevis (African clawed frog) protein is Polyadenylate-binding protein-interacting protein 1.